Here is a 305-residue protein sequence, read N- to C-terminus: Tyrosine recombinase XerD (305 aa).

The region spanning 3–88 (PADASVIERF…TLRAFYGLCL (86 aa)) is the Core-binding (CB) domain. The region spanning 109-299 (SLPKALTESQ…ARQHLQKLHA (191 aa)) is the Tyr recombinase domain. Catalysis depends on residues arginine 149, lysine 173, histidine 251, arginine 254, and histidine 277. Tyrosine 286 functions as the O-(3'-phospho-DNA)-tyrosine intermediate in the catalytic mechanism.

This sequence belongs to the 'phage' integrase family. XerD subfamily. Forms a cyclic heterotetrameric complex composed of two molecules of XerC and two molecules of XerD.

It localises to the cytoplasm. Functionally, site-specific tyrosine recombinase, which acts by catalyzing the cutting and rejoining of the recombining DNA molecules. The XerC-XerD complex is essential to convert dimers of the bacterial chromosome into monomers to permit their segregation at cell division. It also contributes to the segregational stability of plasmids. This Xanthomonas axonopodis pv. citri (strain 306) protein is Tyrosine recombinase XerD.